Here is a 335-residue protein sequence, read N- to C-terminus: Glycerol-3-phosphate dehydrogenase [NAD(P)+] (335 aa).

The NADPH site is built by serine 12, tryptophan 13, and lysine 107. Sn-glycerol 3-phosphate is bound by residues lysine 107, glycine 138, and serine 140. Residue alanine 142 coordinates NADPH. Sn-glycerol 3-phosphate is bound by residues lysine 193, aspartate 246, serine 256, arginine 257, and asparagine 258. Lysine 193 functions as the Proton acceptor in the catalytic mechanism. NADPH is bound at residue arginine 257. Positions 281 and 283 each coordinate NADPH.

Belongs to the NAD-dependent glycerol-3-phosphate dehydrogenase family.

The protein resides in the cytoplasm. The enzyme catalyses sn-glycerol 3-phosphate + NAD(+) = dihydroxyacetone phosphate + NADH + H(+). It carries out the reaction sn-glycerol 3-phosphate + NADP(+) = dihydroxyacetone phosphate + NADPH + H(+). The protein operates within membrane lipid metabolism; glycerophospholipid metabolism. Functionally, catalyzes the reduction of the glycolytic intermediate dihydroxyacetone phosphate (DHAP) to sn-glycerol 3-phosphate (G3P), the key precursor for phospholipid synthesis. The protein is Glycerol-3-phosphate dehydrogenase [NAD(P)+] of Geobacter metallireducens (strain ATCC 53774 / DSM 7210 / GS-15).